The following is a 484-amino-acid chain: uncharacterized protein (484 aa).

This is an uncharacterized protein from Orgyia pseudotsugata multicapsid polyhedrosis virus (OpMNPV).